Reading from the N-terminus, the 1002-residue chain is uncharacterized protein (1002 aa).

This is an uncharacterized protein from Fiji disease virus (isolate Sugarcane) (FDV).